The chain runs to 347 residues: Quinolinate synthase (347 aa).

H47 and S68 together coordinate iminosuccinate. [4Fe-4S] cluster is bound at residue C113. Residues Y139 to N141 and S156 each bind iminosuccinate. Residue C200 coordinates [4Fe-4S] cluster. Residues H226–E228 and T243 contribute to the iminosuccinate site. C297 is a [4Fe-4S] cluster binding site.

This sequence belongs to the quinolinate synthase family. Type 1 subfamily. [4Fe-4S] cluster is required as a cofactor.

It is found in the cytoplasm. It catalyses the reaction iminosuccinate + dihydroxyacetone phosphate = quinolinate + phosphate + 2 H2O + H(+). The protein operates within cofactor biosynthesis; NAD(+) biosynthesis; quinolinate from iminoaspartate: step 1/1. Its function is as follows. Catalyzes the condensation of iminoaspartate with dihydroxyacetone phosphate to form quinolinate. The polypeptide is Quinolinate synthase (Shigella flexneri).